We begin with the raw amino-acid sequence, 278 residues long: Pyrroline-5-carboxylate reductase 2 (278 aa).

It belongs to the pyrroline-5-carboxylate reductase family.

It is found in the cytoplasm. The catalysed reaction is L-proline + NADP(+) = (S)-1-pyrroline-5-carboxylate + NADPH + 2 H(+). It catalyses the reaction L-proline + NAD(+) = (S)-1-pyrroline-5-carboxylate + NADH + 2 H(+). It participates in amino-acid biosynthesis; L-proline biosynthesis; L-proline from L-glutamate 5-semialdehyde: step 1/1. Functionally, catalyzes the reduction of 1-pyrroline-5-carboxylate (PCA) to L-proline. This is Pyrroline-5-carboxylate reductase 2 (proI) from Bacillus subtilis (strain 168).